The sequence spans 282 residues: MAMAINVKKWIEENTEYFLPPVCNKLMHNQQLKVMFVGGPNQRKDYHIEEGEELFYQVEGDMCLKIVENGKHKDVHIKQGEMFLLPGRIPHSPQRYADTVGLVFERRRLDTEKDGLRFYVEGSPEVLFEQWFYCEDLGTQLAPIMKEFFSSKQYKSGKPDPDQPKAKMPFCLSTEQVMEPFSFQHWLNKHRLEIIQKKCVSLFGDDHETKAVIYGGGESKQSKAQTDVWIWQLEGTSHVTLGNEVLKLGSGDSLLVPEETLFSWTREDGSIALSTSQVPLPM.

Positions 1–160 are domain A (catalytic); the sequence is MAMAINVKKW…SKQYKSGKPD (160 aa). Arg-43 is an O2 binding site. The Fe cation site is built by His-47, Glu-53, and His-91. Glu-53 contributes to the substrate binding site. 2 residues coordinate substrate: Arg-95 and Glu-105. A linker region spans residues 161–177; the sequence is PDQPKAKMPFCLSTEQV. The segment at 178 to 282 is domain B; that stretch reads MEPFSFQHWL…LSTSQVPLPM (105 aa).

The protein belongs to the 3-HAO family. In terms of assembly, monomer. Requires Fe(2+) as cofactor.

It localises to the cytoplasm. It is found in the cytosol. The catalysed reaction is 3-hydroxyanthranilate + O2 = (2Z,4Z)-2-amino-3-carboxymuconate 6-semialdehyde. It functions in the pathway cofactor biosynthesis; NAD(+) biosynthesis; quinolinate from L-kynurenine: step 3/3. Functionally, catalyzes the oxidative ring opening of 3-hydroxyanthranilate to 2-amino-3-carboxymuconate semialdehyde, which spontaneously cyclizes to quinolinate. The polypeptide is 3-hydroxyanthranilate 3,4-dioxygenase (haao) (Xenopus laevis (African clawed frog)).